The sequence spans 533 residues: Glucose-6-phosphate isomerase (533 aa).

Glu-341 functions as the Proton donor in the catalytic mechanism. Catalysis depends on residues His-372 and Lys-501.

This sequence belongs to the GPI family.

It localises to the cytoplasm. It catalyses the reaction alpha-D-glucose 6-phosphate = beta-D-fructose 6-phosphate. It participates in carbohydrate biosynthesis; gluconeogenesis. It functions in the pathway carbohydrate degradation; glycolysis; D-glyceraldehyde 3-phosphate and glycerone phosphate from D-glucose: step 2/4. Functionally, catalyzes the reversible isomerization of glucose-6-phosphate to fructose-6-phosphate. The sequence is that of Glucose-6-phosphate isomerase from Cereibacter sphaeroides (strain KD131 / KCTC 12085) (Rhodobacter sphaeroides).